The sequence spans 430 residues: Dolichyl-diphosphooligosaccharide--protein glycosyltransferase subunit WBP1 (430 aa).

Residues 1–20 form the signal peptide; it reads MRTDWNFFFCILLQAIFVVG. Residues 24–393 lie on the Lumenal side of the membrane; that stretch reads SRTLVLYDQS…PRSWEISNSW (370 aa). Residues Asn-60 and Asn-332 are each glycosylated (N-linked (GlcNAc...) asparagine). A helical membrane pass occupies residues 394–414; the sequence is VYISAICGVIVAWIFFVVSFV. At 415–430 the chain is on the cytoplasmic side; it reads TTSSVGKKLETFKKTN.

Belongs to the DDOST 48 kDa subunit family. Component of the oligosaccharyltransferase (OST) complex, which appears to exist in two assemblies comprising OST1, OST2, OST4, OST5, STT3, SWP1, WPB1, and either OST3 or OST6. OST assembly occurs through the formation of 3 subcomplexes. Subcomplex 1 contains OST1 and OST5, subcomplex 2 contains STT3, OST3, and OST4, and subcomplex 3 contains OST2, WBP1, and SWP1. Interacts with SEC61, SBH1 and SSS1.

Its subcellular location is the endoplasmic reticulum membrane. It functions in the pathway protein modification; protein glycosylation. In terms of biological role, subunit of the oligosaccharyl transferase (OST) complex that catalyzes the initial transfer of a defined glycan (Glc(3)Man(9)GlcNAc(2) in eukaryotes) from the lipid carrier dolichol-pyrophosphate to an asparagine residue within an Asn-X-Ser/Thr consensus motif in nascent polypeptide chains, the first step in protein N-glycosylation. N-glycosylation occurs cotranslationally and the complex associates with the Sec61 complex at the channel-forming translocon complex that mediates protein translocation across the endoplasmic reticulum (ER). All subunits are required for a maximal enzyme activity. The protein is Dolichyl-diphosphooligosaccharide--protein glycosyltransferase subunit WBP1 (WBP1) of Saccharomyces cerevisiae (strain ATCC 204508 / S288c) (Baker's yeast).